We begin with the raw amino-acid sequence, 354 residues long: MALLRALLGLLACTPRPSAAYFGLTGNEALTILPLTSEMEEAAVKAHYKVCDRLKLEKKQRRMCRRDPGGAETLMEAISMSALECQYQFRFERWNCTLEGRYRASLLKRGFKETAFLYAISSAGLTHAMAKACSAGRMERCTCDEAPDLENREAWQWGGCGDNLKYSNKFVKEFLGRKPNKDLRARVDFHNNLVGMKVIKAGVETTCKCHGVSGSCTVRTCWRQLSPFHEIGKQLKQKYETSLKVGSTTNEATGEGDISPPKKSIPGHSDQIPRTTDLVYIDDSPSFCLMSRYSPGTSGRKCYKDKNCDSICCGRGHNTQSRVVTRPCQCQVRWCCYVECKQCTQREEVYTCKD.

The signal sequence occupies residues 1–15; it reads MALLRALLGLLACTP. 5 cysteine pairs are disulfide-bonded: Cys85/Cys96, Cys133/Cys141, Cys143/Cys160, Cys207/Cys221, and Cys209/Cys216. A glycan (N-linked (GlcNAc...) asparagine) is linked at Asn95. The O-palmitoleoyl serine; by PORCN moiety is linked to residue Ser213. The tract at residues 246 to 271 is disordered; that stretch reads GSTTNEATGEGDISPPKKSIPGHSDQ. Cystine bridges form between Cys288-Cys313, Cys302-Cys308, Cys312-Cys352, Cys328-Cys343, Cys330-Cys340, and Cys335-Cys336.

The protein belongs to the Wnt family. In terms of processing, palmitoleoylation is required for efficient binding to frizzled receptors. Depalmitoleoylation leads to Wnt signaling pathway inhibition.

It localises to the secreted. Its subcellular location is the extracellular space. The protein resides in the extracellular matrix. Its function is as follows. Ligand for members of the frizzled family of seven transmembrane receptors. Functions in the canonical Wnt/beta-catenin signaling pathway. Plays a role in embryonic chondrocyte maturation and in embryonic bone mineralization. The protein is Protein Wnt-9a (WNT9A) of Gallus gallus (Chicken).